Here is a 127-residue protein sequence, read N- to C-terminus: Fluoride-specific ion channel FluC (127 aa).

The next 4 helical transmembrane spans lie at 4 to 24 (TLLAVFIGGGVGSVARWQLGV), 35 to 55 (LGTLLANLIGAFVIGGALAFF), 71 to 91 (TGLCGGLTTFSTFSAEVVMFL), and 103 to 123 (VLLNLAGSLLMTALAFALVTW). Residues G75 and T78 each coordinate Na(+).

This sequence belongs to the fluoride channel Fluc/FEX (TC 1.A.43) family.

The protein resides in the cell inner membrane. The catalysed reaction is fluoride(in) = fluoride(out). Na(+) is not transported, but it plays an essential structural role and its presence is essential for fluoride channel function. In terms of biological role, fluoride-specific ion channel. Important for reducing fluoride concentration in the cell, thus reducing its toxicity. The sequence is that of Fluoride-specific ion channel FluC from Pectobacterium atrosepticum (strain SCRI 1043 / ATCC BAA-672) (Erwinia carotovora subsp. atroseptica).